We begin with the raw amino-acid sequence, 125 residues long: Small ribosomal subunit protein bS6 (125 aa).

Positions 99-125 (PSIMMKSVEREEARKASTEASAPAQAQ) are disordered. Residues 105–115 (SVEREEARKAS) show a composition bias toward basic and acidic residues. A compositionally biased stretch (polar residues) spans 116-125 (TEASAPAQAQ).

The protein belongs to the bacterial ribosomal protein bS6 family.

In terms of biological role, binds together with bS18 to 16S ribosomal RNA. In Bordetella petrii (strain ATCC BAA-461 / DSM 12804 / CCUG 43448), this protein is Small ribosomal subunit protein bS6.